Here is a 399-residue protein sequence, read N- to C-terminus: Succinyl-diaminopimelate desuccinylase (399 aa).

A Zn(2+)-binding site is contributed by H80. The active site involves D82. Zn(2+) is bound at residue D113. The active-site Proton acceptor is the E147. Residues E148, E176, and H366 each coordinate Zn(2+).

It belongs to the peptidase M20A family. DapE subfamily. As to quaternary structure, homodimer. It depends on Zn(2+) as a cofactor. The cofactor is Co(2+).

It carries out the reaction N-succinyl-(2S,6S)-2,6-diaminopimelate + H2O = (2S,6S)-2,6-diaminopimelate + succinate. The protein operates within amino-acid biosynthesis; L-lysine biosynthesis via DAP pathway; LL-2,6-diaminopimelate from (S)-tetrahydrodipicolinate (succinylase route): step 3/3. Functionally, catalyzes the hydrolysis of N-succinyl-L,L-diaminopimelic acid (SDAP), forming succinate and LL-2,6-diaminopimelate (DAP), an intermediate involved in the bacterial biosynthesis of lysine and meso-diaminopimelic acid, an essential component of bacterial cell walls. This chain is Succinyl-diaminopimelate desuccinylase, found in Colwellia psychrerythraea (strain 34H / ATCC BAA-681) (Vibrio psychroerythus).